The primary structure comprises 89 residues: Probable Fe(2+)-trafficking protein (89 aa).

The protein belongs to the Fe(2+)-trafficking protein family.

Its function is as follows. Could be a mediator in iron transactions between iron acquisition and iron-requiring processes, such as synthesis and/or repair of Fe-S clusters in biosynthetic enzymes. This Legionella pneumophila (strain Lens) protein is Probable Fe(2+)-trafficking protein.